A 216-amino-acid polypeptide reads, in one-letter code: Transmembrane protein 139 (216 aa).

The signal sequence occupies residues 1–25; that stretch reads MVPMHLLGRLEKPLLLLCCASFLLG. Over 26 to 34 the chain is Extracellular; it reads LALLGIKTD. Residues 35–55 traverse the membrane as a helical segment; it reads ITPVAYFFLTLGGFFLFAYLL. Residues 56–216 are Cytoplasmic-facing; sequence VRFLEWGLRS…VFYEDNWAPP (161 aa). The tract at residues 104-163 is disordered; that stretch reads RPQELDQPPPYSTVVIPPAPEEEQPSHPEGSRRAKLEQRRMASEGSMAQEGSPGRAPINL. Residues 127–145 show a composition bias toward basic and acidic residues; it reads QPSHPEGSRRAKLEQRRMA. Ser146 and Ser155 each carry phosphoserine.

Interacts with isoform 2 of SLC4A1.

It is found in the membrane. In terms of biological role, may be involved in cellular trafficking of proteins such as SLC4A1. This is Transmembrane protein 139 (TMEM139) from Homo sapiens (Human).